We begin with the raw amino-acid sequence, 340 residues long: HPr kinase/phosphorylase (340 aa).

Active-site residues include His153 and Lys174. Residue 168 to 175 (GRSGIGKS) participates in ATP binding. Ser175 is a binding site for Mg(2+). Asp192 (proton acceptor; for phosphorylation activity. Proton donor; for dephosphorylation activity) is an active-site residue. The interval 216–225 (MEIRGLGIID) is important for the catalytic mechanism of both phosphorylation and dephosphorylation. Position 217 (Glu217) interacts with Mg(2+). Residue Arg258 is part of the active site. The segment at 279-284 (PIYPGK) is important for the catalytic mechanism of dephosphorylation.

This sequence belongs to the HPrK/P family. As to quaternary structure, homohexamer. It depends on Mg(2+) as a cofactor.

The catalysed reaction is [HPr protein]-L-serine + ATP = [HPr protein]-O-phospho-L-serine + ADP + H(+). The enzyme catalyses [HPr protein]-O-phospho-L-serine + phosphate + H(+) = [HPr protein]-L-serine + diphosphate. In terms of biological role, catalyzes the ATP- as well as the pyrophosphate-dependent phosphorylation of a specific serine residue in HPr, a phosphocarrier protein of the phosphoenolpyruvate-dependent sugar phosphotransferase system (PTS). HprK/P also catalyzes the pyrophosphate-producing, inorganic phosphate-dependent dephosphorylation (phosphorolysis) of seryl-phosphorylated HPr (P-Ser-HPr). This Chloroherpeton thalassium (strain ATCC 35110 / GB-78) protein is HPr kinase/phosphorylase.